Reading from the N-terminus, the 130-residue chain is UPF0251 protein MmarC5_0986 (130 aa).

Belongs to the UPF0251 family.

The polypeptide is UPF0251 protein MmarC5_0986 (Methanococcus maripaludis (strain C5 / ATCC BAA-1333)).